The primary structure comprises 338 residues: Large ribosomal subunit protein uL3 (338 aa).

The span at 228-237 (HKHRKGHRRT) shows a compositional bias: basic residues. The segment at 228-255 (HKHRKGHRRTGTIGPQAPALMFTQPRPG) is disordered.

Belongs to the universal ribosomal protein uL3 family. As to quaternary structure, part of the 50S ribosomal subunit. Forms a cluster with proteins L14 and L24e.

Its function is as follows. One of the primary rRNA binding proteins, it binds directly near the 3'-end of the 23S rRNA, where it nucleates assembly of the 50S subunit. The protein is Large ribosomal subunit protein uL3 of Pyrobaculum calidifontis (strain DSM 21063 / JCM 11548 / VA1).